The chain runs to 283 residues: MSEVSKISTLLAPEKFVKLSVSDKFKWKAPSRVCSIVQSDTISMTANGRSLFTFDVLKDVLKHAEEYTYVDVLGVVLSGQWLLPKGTPGSAEIILLDSRLKGKASVLAVFNCRAATQEFQFLISPGYSLTCADALKKPFEISCNVIDLPVKDGFTPLSVEIACLVQFSNCVITRSLTMKLKENPATRTFSAEEVDELLGSMTTLRSIEGLRKKKEPNDVVQGHLSAEYDVKRSVKRTKSENTPGKRRVNVDSVSLGLGKGKSVSAKNEDTESVFDDGILDSDS.

The interval 233-283 (SVKRTKSENTPGKRRVNVDSVSLGLGKGKSVSAKNEDTESVFDDGILDSDS) is disordered. A compositionally biased stretch (acidic residues) spans 270–283 (TESVFDDGILDSDS).

It belongs to the tobamovirus movement protein family.

The protein localises to the host cytoplasm. It localises to the host cytoskeleton. Its subcellular location is the host cell junction. The protein resides in the host plasmodesma. Functionally, transports viral genome to neighboring plant cells directly through plasmosdesmata, without any budding. The movement protein allows efficient cell to cell propagation, by bypassing the host cell wall barrier. Forms a ribonucleoprotein complex with viral RNA. Binds microtubules and modulates microtubule stability. Can bind double-stranded DNA. This Crotalaria juncea (Sunn hemp) protein is Movement protein (MP).